The primary structure comprises 185 residues: Ribosome-recycling factor (185 aa).

The protein belongs to the RRF family.

It is found in the cytoplasm. Its function is as follows. Responsible for the release of ribosomes from messenger RNA at the termination of protein biosynthesis. May increase the efficiency of translation by recycling ribosomes from one round of translation to another. The protein is Ribosome-recycling factor of Helicobacter hepaticus (strain ATCC 51449 / 3B1).